A 546-amino-acid polypeptide reads, in one-letter code: MAGGVDGPIGIPFPDHSSDILSSLNEQRNNGLLCDVVILVEGQEFPTHRSVLAACSQYFKKLFTSGLVVDQQNVYEIDFVSADALSALLEFAYTATLTVSTSNVNDILNAAKLLEIPAVRDVCTDLLDRKILAKNDQMDLVDQIDQRNHLRAKEYLEFFQSNPVNGHQGSFPWTNPELRDLQRLNFRGQEDEEEPDCNGLDFYSQAPLNERPKANDCDPDSNPAMWLDREEEEAAAAPGSLFSPSQNGHYSGRGLGTPGEEEGAPGAALDQQDAGDSPSFVPTGAEAEDDARDVDGLAASVLQQVMGSVGRQQLGDDERKDDDGVVDYYLKYFGSSNESDVYPSWSQKVEKKIRAKAFQKCPICAKVIQGAGKLPRHIRTHTGEKPYECNICNVRFTRQDKLKVHMRKHTGEKPYLCQQCGAAFAHNYDLKNHMRVHTGLRPYQCDSCFKTFVRSDHLHRHLKKDGCNGIPSRRGRRPRVRDAGGLPTPTGNPEDGGFQGGGESQESEDTVQGNGREQHFEESSTAEAAGLNVAGGAAEGSAPGPS.

One can recognise a BTB domain in the interval 34–101 (CDVVILVEGQ…AYTATLTVST (68 aa)). The segment at 189 to 288 (QEDEEEPDCN…SFVPTGAEAE (100 aa)) is disordered. 3 C2H2-type zinc fingers span residues 359–381 (QKCP…IRTH), 387–409 (YECN…MRKH), and 415–437 (YLCQ…MRVH). A C2H2-type 4; atypical zinc finger spans residues 443-467 (YQCDSCFKTFVRSDHLHRHLKKDGC). Residues 463–546 (KKDGCNGIPS…AAEGSAPGPS (84 aa)) are disordered. Low complexity predominate over residues 534 to 546 (AGGAAEGSAPGPS).

It is found in the nucleus. Functionally, transcription factor that represses the transcription of a wide range of genes involved in cell proliferation and differentiation. Directly and specifically binds to the consensus sequence 5'-[GA][CA]GACCCCCCCCC-3' and represses transcription both by regulating the organization of chromatin and through the direct recruitment of transcription factors to gene regulatory regions. May also play a role, independently of its transcriptional activity, in double-strand break repair via classical non-homologous end joining/cNHEJ and in alternative splicing. This chain is Zinc finger and BTB domain-containing protein 7A, found in Gallus gallus (Chicken).